The following is a 331-amino-acid chain: Ketol-acid reductoisomerase (NADP(+)) (331 aa).

One can recognise a KARI N-terminal Rossmann domain in the interval A2–T182. NADP(+) is bound by residues Y25–Q28, S51, S53, and D83–Q86. H108 is an active-site residue. Position 134 (G134) interacts with NADP(+). The KARI C-terminal knotted domain occupies S183–L328. Residues D191, E195, E227, and E231 each coordinate Mg(2+). S252 is a binding site for substrate.

It belongs to the ketol-acid reductoisomerase family. Mg(2+) is required as a cofactor.

It catalyses the reaction (2R)-2,3-dihydroxy-3-methylbutanoate + NADP(+) = (2S)-2-acetolactate + NADPH + H(+). The catalysed reaction is (2R,3R)-2,3-dihydroxy-3-methylpentanoate + NADP(+) = (S)-2-ethyl-2-hydroxy-3-oxobutanoate + NADPH + H(+). The protein operates within amino-acid biosynthesis; L-isoleucine biosynthesis; L-isoleucine from 2-oxobutanoate: step 2/4. It functions in the pathway amino-acid biosynthesis; L-valine biosynthesis; L-valine from pyruvate: step 2/4. Involved in the biosynthesis of branched-chain amino acids (BCAA). Catalyzes an alkyl-migration followed by a ketol-acid reduction of (S)-2-acetolactate (S2AL) to yield (R)-2,3-dihydroxy-isovalerate. In the isomerase reaction, S2AL is rearranged via a Mg-dependent methyl migration to produce 3-hydroxy-3-methyl-2-ketobutyrate (HMKB). In the reductase reaction, this 2-ketoacid undergoes a metal-dependent reduction by NADPH to yield (R)-2,3-dihydroxy-isovalerate. The chain is Ketol-acid reductoisomerase (NADP(+)) from Gloeothece citriformis (strain PCC 7424) (Cyanothece sp. (strain PCC 7424)).